The sequence spans 737 residues: Oligopeptide transporter 3 (737 aa).

A run of 16 helical transmembrane segments spans residues Ala45–Tyr65, Pro69–Ala89, Val117–Ile137, Phe153–Ile173, Phe215–Ile235, Val255–Ser275, Ile289–Trp309, Leu357–Thr377, Trp418–Trp438, Trp446–Ile466, Ile478–Phe498, Ala532–Leu552, Val604–Phe624, Trp629–Thr649, Pro650–Tyr670, and Val681–Leu701.

It belongs to the oligopeptide OPT transporter (TC 2.A.67.1) family. As to expression, strong expression in flowers, leaves and roots. Preferentially expressed in the vascular tissues of seedlings and mature plants as well as in pollen and developing embryos.

The protein localises to the membrane. Functionally, may be involved in the translocation of tetra- and pentapeptides across the cellular membrane in an energy-dependent manner. Also acts as a metal transporter that could be a component of the copper transport machinery. Essential for early embryo development. This Arabidopsis thaliana (Mouse-ear cress) protein is Oligopeptide transporter 3 (OPT3).